A 248-amino-acid polypeptide reads, in one-letter code: tRNA uridine(34) hydroxylase (248 aa).

The Rhodanese domain occupies 128–222; the sequence is EGRPVVMLDT…YFEEVGGAHY (95 aa). Cysteine 182 functions as the Cysteine persulfide intermediate in the catalytic mechanism.

The protein belongs to the TrhO family.

The enzyme catalyses uridine(34) in tRNA + AH2 + O2 = 5-hydroxyuridine(34) in tRNA + A + H2O. In terms of biological role, catalyzes oxygen-dependent 5-hydroxyuridine (ho5U) modification at position 34 in tRNAs. This is tRNA uridine(34) hydroxylase from Thiobacillus denitrificans (strain ATCC 25259 / T1).